Consider the following 369-residue polypeptide: Cyclin-I2 (369 aa).

A disordered region spans residues 1–116 (MASGAQLPPQ…SRKPRNLEGD (116 aa)). 2 stretches are compositionally biased toward low complexity: residues 64 to 76 (AASLHAASAAVPV) and 83 to 101 (APAGKTADAVPAAAPEQAP).

This sequence belongs to the cyclin family.

The polypeptide is Cyclin-I2 (CCNI2) (Homo sapiens (Human)).